The primary structure comprises 309 residues: GTP cyclohydrolase MptA (309 aa).

This sequence belongs to the GTP cyclohydrolase IV family. In terms of assembly, homodimer. Fe(2+) is required as a cofactor.

It carries out the reaction GTP + H2O = 7,8-dihydroneopterin 2',3'-cyclic phosphate + formate + diphosphate + H(+). It participates in cofactor biosynthesis; 5,6,7,8-tetrahydromethanopterin biosynthesis. In terms of biological role, converts GTP to 7,8-dihydro-D-neopterin 2',3'-cyclic phosphate, the first intermediate in the biosynthesis of coenzyme methanopterin. The protein is GTP cyclohydrolase MptA of Haloquadratum walsbyi (strain DSM 16790 / HBSQ001).